A 350-amino-acid polypeptide reads, in one-letter code: SUMO-activating enzyme subunit 1 (350 aa).

N-acetylmethionine is present on M1. Position 2 is an N-acetylvaline; in SUMO-activating enzyme subunit 1, N-terminally processed (V2). Position 16 is a phosphoserine (S16). K202 bears the N6-acetyllysine mark.

It belongs to the ubiquitin-activating E1 family. Heterodimer of SAE1 and UBA2/SAE2. The heterodimer corresponds to the two domains that are encoded on a single polypeptide chain in ubiquitin-activating enzyme E1. Interacts with UBE2I. As to expression, broadly expressed, with highest levels in testis.

It is found in the nucleus. The protein operates within protein modification; protein sumoylation. Functionally, the heterodimer acts as an E1 ligase for SUMO1, SUMO2, SUMO3, and probably SUMO4. It mediates ATP-dependent activation of SUMO proteins followed by formation of a thioester bond between a SUMO protein and a conserved active site cysteine residue on UBA2/SAE2. The chain is SUMO-activating enzyme subunit 1 (Sae1) from Mus musculus (Mouse).